A 197-amino-acid polypeptide reads, in one-letter code: Protein GrpE (197 aa).

A disordered region spans residues 1-40; it reads MSSKEQKTPEGQAPEEIIMDRHEEIEAVEPEASAEQVDPR.

This sequence belongs to the GrpE family. As to quaternary structure, homodimer.

Its subcellular location is the cytoplasm. Participates actively in the response to hyperosmotic and heat shock by preventing the aggregation of stress-denatured proteins, in association with DnaK and GrpE. It is the nucleotide exchange factor for DnaK and may function as a thermosensor. Unfolded proteins bind initially to DnaJ; upon interaction with the DnaJ-bound protein, DnaK hydrolyzes its bound ATP, resulting in the formation of a stable complex. GrpE releases ADP from DnaK; ATP binding to DnaK triggers the release of the substrate protein, thus completing the reaction cycle. Several rounds of ATP-dependent interactions between DnaJ, DnaK and GrpE are required for fully efficient folding. This Shigella flexneri serotype 5b (strain 8401) protein is Protein GrpE.